The chain runs to 318 residues: Deoxyribose-phosphate aldolase (318 aa).

Asp155 (proton donor/acceptor) is an active-site residue. The active-site Schiff-base intermediate with acetaldehyde is Lys218. Lys254 (proton donor/acceptor) is an active-site residue.

Belongs to the DeoC/FbaB aldolase family. DeoC type 2 subfamily. As to quaternary structure, interacts with YBX1.

It is found in the cytoplasm. The protein resides in the cytoplasmic granule. Its subcellular location is the nucleus. The enzyme catalyses 2-deoxy-D-ribose 5-phosphate = D-glyceraldehyde 3-phosphate + acetaldehyde. It participates in carbohydrate degradation; 2-deoxy-D-ribose 1-phosphate degradation; D-glyceraldehyde 3-phosphate and acetaldehyde from 2-deoxy-alpha-D-ribose 1-phosphate: step 2/2. Functionally, catalyzes a reversible aldol reaction between acetaldehyde and D-glyceraldehyde 3-phosphate to generate 2-deoxy-D-ribose 5-phosphate. Participates in stress granule (SG) assembly. May allow ATP production from extracellular deoxyinosine in conditions of energy deprivation. This is Deoxyribose-phosphate aldolase (DERA) from Bos taurus (Bovine).